A 382-amino-acid polypeptide reads, in one-letter code: 1-deoxy-D-xylulose 5-phosphate reductoisomerase (382 aa).

NADPH-binding residues include Thr-10, Gly-11, Ser-12, Ile-13, Asn-38, and Asn-120. Residue Lys-121 participates in 1-deoxy-D-xylulose 5-phosphate binding. Residue Glu-122 participates in NADPH binding. Asp-146 provides a ligand contact to Mn(2+). Residues Ser-147, Glu-148, Ser-172, and His-195 each coordinate 1-deoxy-D-xylulose 5-phosphate. Mn(2+) is bound at residue Glu-148. Gly-201 is a binding site for NADPH. 1-deoxy-D-xylulose 5-phosphate is bound by residues Ser-208, Asn-213, Lys-214, and Glu-217. Glu-217 is a binding site for Mn(2+).

The protein belongs to the DXR family. It depends on Mg(2+) as a cofactor. Mn(2+) is required as a cofactor.

It carries out the reaction 2-C-methyl-D-erythritol 4-phosphate + NADP(+) = 1-deoxy-D-xylulose 5-phosphate + NADPH + H(+). Its pathway is isoprenoid biosynthesis; isopentenyl diphosphate biosynthesis via DXP pathway; isopentenyl diphosphate from 1-deoxy-D-xylulose 5-phosphate: step 1/6. Catalyzes the NADPH-dependent rearrangement and reduction of 1-deoxy-D-xylulose-5-phosphate (DXP) to 2-C-methyl-D-erythritol 4-phosphate (MEP). The protein is 1-deoxy-D-xylulose 5-phosphate reductoisomerase of Thermoanaerobacter sp. (strain X514).